The sequence spans 654 residues: Cytochrome B pre-mRNA-processing protein 1 (654 aa).

The protein resides in the mitochondrion. Its function is as follows. Responsible for conferring a stable 5'-end on cytochrome b mRNA. The protein is Cytochrome B pre-mRNA-processing protein 1 (CBP1) of Saccharomyces cerevisiae (strain ATCC 204508 / S288c) (Baker's yeast).